The following is a 295-amino-acid chain: Nucleotide-binding protein Lxx11490 (295 aa).

19 to 26 lines the ATP pocket; sequence GMSGAGRS. 70–73 is a binding site for GTP; it reads DVRG.

This sequence belongs to the RapZ-like family.

Its function is as follows. Displays ATPase and GTPase activities. This Leifsonia xyli subsp. xyli (strain CTCB07) protein is Nucleotide-binding protein Lxx11490.